Here is a 54-residue protein sequence, read N- to C-terminus: Photosystem II reaction center protein K (54 aa).

A propeptide spanning residues 1-17 (MSFITLNNFFNTNTFFG) is cleaved from the precursor. Residues 29–49 (LIDVLPIIPVLFFLLAFVWQA) traverse the membrane as a helical segment.

This sequence belongs to the PsbK family. PSII is composed of 1 copy each of membrane proteins PsbA, PsbB, PsbC, PsbD, PsbE, PsbF, PsbH, PsbI, PsbJ, PsbK, PsbL, PsbM, PsbT, PsbY, PsbZ, Psb30/Ycf12, at least 3 peripheral proteins of the oxygen-evolving complex and a large number of cofactors. It forms dimeric complexes.

The protein localises to the plastid. The protein resides in the chloroplast thylakoid membrane. One of the components of the core complex of photosystem II (PSII). PSII is a light-driven water:plastoquinone oxidoreductase that uses light energy to abstract electrons from H(2)O, generating O(2) and a proton gradient subsequently used for ATP formation. It consists of a core antenna complex that captures photons, and an electron transfer chain that converts photonic excitation into a charge separation. The polypeptide is Photosystem II reaction center protein K (Euglena gracilis).